The following is a 275-amino-acid chain: Calcium-binding protein 4 (275 aa).

The span at 1–12 (MTTEQARGQQGP) shows a compositional bias: polar residues. The disordered stretch occupies residues 1-112 (MTTEQARGQQ…SLHDAAQRTY (112 aa)). Residues 38–55 (TRKRSKKERGLRGSRKRT) are compositionally biased toward basic residues. Ser42 carries the post-translational modification Phosphoserine. EF-hand domains lie at 129–164 (EELDELQAAFEEFDTDRDGYISHRELGDCMRTLGYM), 183–200 (GRVDFEEFVELIGPKLRE), 206–241 (LGVRELRIAFREFDRDRDGRITVAELREAVPALLGE), and 243–275 (LAGPELDEMLREVDLNGDGTVDFDEFVMMLSRH). Ca(2+)-binding residues include Asp142, Asp144, Asp146, Tyr148, and Glu153. The Ca(2+) site is built by Asp219, Asp221, Asp223, Arg225, Glu230, Asp256, Asn258, Asp260, Thr262, and Glu267.

Interacts with CACNA1F and CACNA1D (via IQ domain) in a calcium independent manner. Interacts (via N-terminus) with UNC119. In terms of processing, phosphorylated. Phosphorylation levels change with the light conditions and regulate the activity. Expressed in retina and in the inner hair cells (IHC) of the cochlea.

The protein localises to the cytoplasm. It is found in the presynapse. Involved in normal synaptic function through regulation of Ca(2+) influx and neurotransmitter release in photoreceptor synaptic terminals and in auditory transmission. Modulator of CACNA1D and CACNA1F, suppressing the calcium-dependent inactivation and shifting the activation range to more hyperpolarized voltages. This Homo sapiens (Human) protein is Calcium-binding protein 4 (CABP4).